We begin with the raw amino-acid sequence, 286 residues long: Putative inorganic pyrophosphatase C3A12.02 (286 aa).

Arg-85 provides a ligand contact to diphosphate. Mg(2+) contacts are provided by Asp-122, Asp-127, and Asp-159.

The protein belongs to the PPase family. Mg(2+) is required as a cofactor.

Its subcellular location is the cytoplasm. It carries out the reaction diphosphate + H2O = 2 phosphate + H(+). This chain is Putative inorganic pyrophosphatase C3A12.02, found in Schizosaccharomyces pombe (strain 972 / ATCC 24843) (Fission yeast).